Reading from the N-terminus, the 161-residue chain is Lipoprotein signal peptidase (161 aa).

3 helical membrane-spanning segments follow: residues 6-26, 67-87, and 90-110; these read ILFLITAGLVLLLDQFTKFYV, GLFFTSVTLIAAGLILFYLIK, and VSDLMMVIPLALVLAGAMGNL. Residues Asp121 and Asp139 contribute to the active site. Residues 134–154 traverse the membrane as a helical segment; that stretch reads AFNIADTAISIGVLFLVVDMI.

This sequence belongs to the peptidase A8 family.

Its subcellular location is the cell inner membrane. It carries out the reaction Release of signal peptides from bacterial membrane prolipoproteins. Hydrolyzes -Xaa-Yaa-Zaa-|-(S,diacylglyceryl)Cys-, in which Xaa is hydrophobic (preferably Leu), and Yaa (Ala or Ser) and Zaa (Gly or Ala) have small, neutral side chains.. The protein operates within protein modification; lipoprotein biosynthesis (signal peptide cleavage). Functionally, this protein specifically catalyzes the removal of signal peptides from prolipoproteins. This Syntrophus aciditrophicus (strain SB) protein is Lipoprotein signal peptidase.